The sequence spans 524 residues: MAQFNSTWAISGRRSAISVDTFHALSIQAPGLLLGTLLFYLFYKYTTRIYFHPLSGIPGPRLAAATHLYEAYYNILRQGLSKRAVQLHKAYNSPVIRLGTNRVHVGDPSYYHTIYNSGTDYHKDPGVYKLLGIDGSILTITDPEEHKQYRSIVGSLFSRKTADDLAPMMAALLNRSTESMARQGREGKPSVIQRIYRSVAADMVSYLLFNRPLGLIDSPQEADHYHSFMLSIDRFTAITWPRFYYPILNWVIDSFPAFVVERLQPGLRNLQELFKGWLDESIAAHDAGKPVESRSTYFDLMIEAKRKTGEPLRPDQLFDDILNYLVAGMEATSYVLSFGTYFLLNSPEAKAKLEAELLEASPFIREKFDHRRIMALPYLTAVVKECLRLSNTVPGFLPRVVPKGGVDIGGYHIPGGTQISMIHPVVELNEEIFPNPHEFIPERWLGDNGQDLEKWAIAFSKGRRQCIGKNLAYMMLYASIAVVFSRLEMELYETTAADMEIIDQFAPIIQGVVKVKITKDRWRE.

A helical membrane pass occupies residues 22–42 (FHALSIQAPGLLLGTLLFYLF). C466 is a heme binding site.

It belongs to the cytochrome P450 family. Heme serves as cofactor.

Its subcellular location is the membrane. The catalysed reaction is cyclo(L-arginyl-tyrosyl) + reduced [NADPH--hemoprotein reductase] + O2 = cyclo(L-arginyl-L-dehydrotyrosyl) + oxidized [NADPH--hemoprotein reductase] + 2 H2O + H(+). The protein operates within alkaloid biosynthesis. In terms of biological role, cytochrome P450 monooxygenase; part of the ank cluster that mediates the biosynthesis of NK13650 C, a highly modified cyclo-arginine-tyrosine dipeptide. AnkB is responsible for desaturation of the ankA product cyclo-Arg-Tyr diketopiperazine, likely through hydroxylation of the benzylic position followed by dehydration to yield a dehydro-cyclodipeptide. Within the pathway, the cyclodipeptide synthase ankA acts as the scaffold-generating enzyme and is responsible for formation of the cyclo-Arg-Tyr diketopiperazine (cRY) from L-Arg and L-Tyr. The ankA product cRY is desaturated by the cytochrome P450 monooxygenase ankB to yield a dehydro-cyclodipeptide intermediate. The FAD-dependent monooxygenase ankC then installs the m-OH, ankD catalyzes the attachment of L-homoserine, and ankE ligates citrate to the ankD product to yield NK13650 B. The O-methyltransferase ankF is responsible for methylation of the C-17 phenol group of NK13650 B to produce NK13650 D. Amidation of NK13650 D with L-Asp by ankG then leads to the production of NK13650 C, whereas amidation of NK13650 B produces NK13650 A. This is Cytochrome P450 monooxygenase ankB from Aspergillus thermomutatus (Neosartorya pseudofischeri).